A 127-amino-acid polypeptide reads, in one-letter code: Holo-[acyl-carrier-protein] synthase (127 aa).

Mg(2+) is bound by residues aspartate 9 and glutamate 58.

The protein belongs to the P-Pant transferase superfamily. AcpS family. Mg(2+) serves as cofactor.

The protein resides in the cytoplasm. The catalysed reaction is apo-[ACP] + CoA = holo-[ACP] + adenosine 3',5'-bisphosphate + H(+). Its function is as follows. Transfers the 4'-phosphopantetheine moiety from coenzyme A to a Ser of acyl-carrier-protein. The chain is Holo-[acyl-carrier-protein] synthase from Shewanella baltica (strain OS223).